Consider the following 187-residue polypeptide: Large ribosomal subunit protein uL18 (187 aa).

This sequence belongs to the universal ribosomal protein uL18 family. In terms of assembly, part of the 50S ribosomal subunit. Interacts with proteins L5 and L21e, and attaches the 5S rRNA to the 23S rRNA. Has been cross-linked to L21e.

Its function is as follows. This is one of 5 proteins that mediate the attachment of the 5S rRNA onto the large ribosomal subunit, where it forms part of the central protuberance and stabilizes the orientation of adjacent RNA domains. The sequence is that of Large ribosomal subunit protein uL18 (rpl18) from Haloarcula marismortui (strain ATCC 43049 / DSM 3752 / JCM 8966 / VKM B-1809) (Halobacterium marismortui).